A 113-amino-acid polypeptide reads, in one-letter code: Large ribosomal subunit protein uL22 (113 aa).

This sequence belongs to the universal ribosomal protein uL22 family. As to quaternary structure, part of the 50S ribosomal subunit.

In terms of biological role, this protein binds specifically to 23S rRNA; its binding is stimulated by other ribosomal proteins, e.g. L4, L17, and L20. It is important during the early stages of 50S assembly. It makes multiple contacts with different domains of the 23S rRNA in the assembled 50S subunit and ribosome. Its function is as follows. The globular domain of the protein is located near the polypeptide exit tunnel on the outside of the subunit, while an extended beta-hairpin is found that lines the wall of the exit tunnel in the center of the 70S ribosome. The chain is Large ribosomal subunit protein uL22 from Roseiflexus sp. (strain RS-1).